A 140-amino-acid chain; its full sequence is Gonadotropin subunit beta-2 (140 aa).

Positions M1 to G24 are cleaved as a signal peptide. Cystine bridges form between C30–C78, C44–C93, C47–C131, C55–C109, C59–C111, and C114–C121. N-linked (GlcNAc...) asparagine glycosylation is present at N34.

This sequence belongs to the glycoprotein hormones subunit beta family. Heterodimer of an alpha and a beta chain.

Its subcellular location is the secreted. Functionally, involved in gametogenesis and steroidogenesis. In Anguilla anguilla (European freshwater eel), this protein is Gonadotropin subunit beta-2 (cgbb).